Here is a 129-residue protein sequence, read N- to C-terminus: uncharacterized protein (129 aa).

A disordered region spans residues 1 to 129 (MWLWQDIQCC…HTSNGRTGDL (129 aa)). Basic and acidic residues predominate over residues 87 to 100 (KGADTRRLPRETRP). A compositionally biased stretch (polar residues) spans 119-129 (PHTSNGRTGDL).

This is an uncharacterized protein from Homo sapiens (Human).